Here is a 1019-residue protein sequence, read N- to C-terminus: Phosphatidylinositol 3,4,5-trisphosphate 5-phosphatase 1 (1019 aa).

An SH2 domain is found at 5-101; the sequence is WYHGNITRSK…GLVTHLQYPI (97 aa). The segment covering 103–116 has biased composition (acidic residues); sequence KEEEGPEEPDEEQE. Disordered regions lie at residues 103-133 and 909-1019; these read KEEEGPEEPDEEQEPAPPNVPPRNFAFTPPS and ETQN…PPTA. The SH3-binding 1 motif lies at 120–125; that stretch reads PNVPPR. Polar residues-rich tracts occupy residues 909–931 and 958–980; these read ETQNSMDHTASVAAISSQAKQSP and PITSPPRTTLSTQKFSHSNTNRT. Positions 966–971 match the SH3-binding 2 motif; that stretch reads TLSTQK. The short motif at 1004–1007 is the NPXY motif element; the sequence is NPLY. The residue at position 1007 (Tyr-1007) is a Phosphotyrosine. Positions 1010–1019 are enriched in polar residues; it reads VNNTLYPPTA.

The protein belongs to the inositol 1,4,5-trisphosphate 5-phosphatase family. In terms of processing, tyrosine phosphorylated by the members of the SRC family after exposure to a diverse array of extracellular stimuli.

It localises to the cytoplasm. The protein resides in the cell membrane. It is found in the membrane raft. Its subcellular location is the cytoskeleton. The enzyme catalyses a 1,2-diacyl-sn-glycero-3-phospho-(1D-myo-inositol-3,4,5-trisphosphate) + H2O = a 1,2-diacyl-sn-glycero-3-phospho-(1D-myo-inositol-3,4-bisphosphate) + phosphate. It carries out the reaction 1D-myo-inositol 1,3,4,5-tetrakisphosphate + H2O = 1D-myo-inositol 1,3,4-trisphosphate + phosphate. It catalyses the reaction a 1,2-diacyl-sn-glycero-3-phospho-(1D-myo-inositol-4,5-bisphosphate) + H2O = a 1,2-diacyl-sn-glycero-3-phospho-(1D-myo-inositol 4-phosphate) + phosphate. Its function is as follows. Phosphatidylinositol (PtdIns) phosphatase that specifically hydrolyzes the 5-phosphate of phosphatidylinositol-3,4,5-trisphosphate (PtdIns(3,4,5)P3) to produce PtdIns(3,4)P2, thereby negatively regulating the PI3K (phosphoinositide 3-kinase) pathways. Able also to hydrolyzes the 5-phosphate of phosphatidylinositol-4,5-bisphosphate (PtdIns(4,5)P3) and inositol 1,3,4,5-tetrakisphosphate. Acts as a negative regulator of B-cell antigen receptor signaling. Mediates signaling from the FC-gamma-RIIB receptor (FCGR2B), playing a central role in terminating signal transduction from activating immune/hematopoietic cell receptor systems. Acts as a negative regulator of myeloid cell proliferation/survival and chemotaxis, mast cell degranulation, immune cells homeostasis, integrin alpha-IIb/beta-3 signaling in platelets and JNK signaling in B-cells. This chain is Phosphatidylinositol 3,4,5-trisphosphate 5-phosphatase 1 (inpp5d), found in Xenopus laevis (African clawed frog).